A 284-amino-acid polypeptide reads, in one-letter code: NADH-cytochrome b5 reductase 1 (284 aa).

A helical transmembrane segment spans residues 7–27; it reads KLVVVIVIVVVPLLFKFIIGP. The region spanning 38-142 is the FAD-binding FR-type domain; the sequence is NDFQSFPLVE…KGPRGNYHYE (105 aa). Residues 122–137 and 148–180 each bind FAD; these read GELKIGDSIQIKGPRG and HLGMIAGGTGIAPMYQIMKAIAMDPHDTTKVSL.

The protein belongs to the flavoprotein pyridine nucleotide cytochrome reductase family. Monomer. Component of the 2-(3-amino-3-carboxypropyl)histidine synthase complex composed of DPH1, DPH2, KTI11/DPH3 and a NADH-dependent reductase, predominantly CBR1. Interacts with KTI11/DPH3. Interacts with STE20. FAD is required as a cofactor.

The protein resides in the mitochondrion outer membrane. The enzyme catalyses 2 Fe(III)-[cytochrome b5] + NADH = 2 Fe(II)-[cytochrome b5] + NAD(+) + H(+). The catalysed reaction is 2 Fe(3+)-[Dph3] + NADH = 2 Fe(2+)-[Dph3] + NAD(+) + H(+). Its pathway is protein modification; peptidyl-diphthamide biosynthesis. With respect to regulation, competitively inhibited by NAD(+). Inhibited by mercurials such as p-chloromercuribenzoate (PCMB) and HgCl(2). Enzymatic activity increases under anaerobic conditions. NADH-dependent reductase for KTI11/DPH3 and cytochrome b5. Required for the first step of diphthamide biosynthesis, a post-translational modification of histidine which occurs in elongation factor 2. DPH1 and DPH2 transfer a 3-amino-3-carboxypropyl (ACP) group from S-adenosyl-L-methionine (SAM) to a histidine residue, the reaction is assisted by a reduction system comprising KTI11/DPH3 and a NADH-dependent reductase, predominantly CBR1. By reducing KTI11/DPH3, also involved in the formation of the tRNA wobble base modification mcm5s 2U (5-methoxycarbonylmethyl-2-thiouridine), mediated by the elongator complex. The cytochrome b5/NADH cytochrome b5 reductase electron transfer system supports the catalytic activity of several sterol biosynthetic enzymes. Plays a role in bud morphology. In Saccharomyces cerevisiae (strain ATCC 204508 / S288c) (Baker's yeast), this protein is NADH-cytochrome b5 reductase 1 (CBR1).